The chain runs to 639 residues: Threonine--tRNA ligase (639 aa).

The 61-residue stretch at 1–61 folds into the TGS domain; that stretch reads MIKVALKDGS…DTDCDLNLFK (61 aa). Positions 242–532 are catalytic; it reads DHRKLGKELG…LIEHYAGKFP (291 aa). Zn(2+)-binding residues include Cys-333, His-384, and His-509.

The protein belongs to the class-II aminoacyl-tRNA synthetase family. As to quaternary structure, homodimer. Zn(2+) serves as cofactor.

Its subcellular location is the cytoplasm. It carries out the reaction tRNA(Thr) + L-threonine + ATP = L-threonyl-tRNA(Thr) + AMP + diphosphate + H(+). Its function is as follows. Catalyzes the attachment of threonine to tRNA(Thr) in a two-step reaction: L-threonine is first activated by ATP to form Thr-AMP and then transferred to the acceptor end of tRNA(Thr). Also edits incorrectly charged L-seryl-tRNA(Thr). The protein is Threonine--tRNA ligase of Clostridioides difficile (strain 630) (Peptoclostridium difficile).